The chain runs to 133 residues: Small ribosomal subunit protein uS8 (133 aa).

It belongs to the universal ribosomal protein uS8 family. In terms of assembly, part of the 30S ribosomal subunit.

In terms of biological role, one of the primary rRNA binding proteins, it binds directly to 16S rRNA central domain where it helps coordinate assembly of the platform of the 30S subunit. This chain is Small ribosomal subunit protein uS8, found in Saccharolobus islandicus (strain L.S.2.15 / Lassen #1) (Sulfolobus islandicus).